Consider the following 538-residue polypeptide: Probable bifunctional riboflavin biosynthesis protein RIBA 1, chloroplastic (538 aa).

The span at 1–16 shows a compositional bias: polar residues; sequence MSRLSSIYSQHRTSGL. Residues 1-29 form a disordered region; the sequence is MSRLSSIYSQHRTSGLRSDRSIMPNSTSN. The transit peptide at 1 to 73 directs the protein to the chloroplast; sequence MSRLSSIYSQ…NGQASPSKVV (73 aa). The tract at residues 46–311 is DHBP synthase; it reads RNFHISHAVG…IADLIRYRRK (266 aa). D-ribulose 5-phosphate is bound by residues 134–135, Asp139, 249–253, and Glu273; these read RE and RAGHT. Glu135 serves as a coordination point for Mg(2+). His252 lines the Mg(2+) pocket. Residues 312-530 form a GTP cyclohydrolase II region; the sequence is RDRLVERVCV…DGGIKKEQDQ (219 aa). 362–366 serves as a coordination point for GTP; that stretch reads RVHSE. 3 residues coordinate Zn(2+): Cys367, Cys378, and Cys380. Residues Gln383, 406 to 408, and Thr428 each bind GTP; that span reads EGR. Asp440 serves as the catalytic Proton acceptor; for GTP cyclohydrolase activity. Arg442 acts as the Nucleophile; for GTP cyclohydrolase activity in catalysis. 2 residues coordinate GTP: Thr463 and Lys468. Residues 506 to 538 are disordered; that stretch reads HVYGTRPSGNTSTLADGGIKKEQDQIDSASEQE.

This sequence in the N-terminal section; belongs to the DHBP synthase family. In the C-terminal section; belongs to the GTP cyclohydrolase II family. It depends on Mg(2+) as a cofactor. Mn(2+) is required as a cofactor. The cofactor is Zn(2+).

It is found in the plastid. The protein resides in the chloroplast. It carries out the reaction D-ribulose 5-phosphate = (2S)-2-hydroxy-3-oxobutyl phosphate + formate + H(+). The enzyme catalyses GTP + 4 H2O = 2,5-diamino-6-hydroxy-4-(5-phosphoribosylamino)-pyrimidine + formate + 2 phosphate + 3 H(+). Its pathway is cofactor biosynthesis; riboflavin biosynthesis; 2-hydroxy-3-oxobutyl phosphate from D-ribulose 5-phosphate: step 1/1. It participates in cofactor biosynthesis; riboflavin biosynthesis; 5-amino-6-(D-ribitylamino)uracil from GTP: step 1/4. Involved in riboflavin biosynthesis. Catalyzes both the conversion of D-ribulose 5-phosphate to formate and 3,4-dihydroxy-2-butanone 4-phosphate and the conversion of GTP to 2,5-diamino-6-ribosylamino-4(3H)-pyrimidinone 5'-phosphate (DARP), formate and pyrophosphate. This chain is Probable bifunctional riboflavin biosynthesis protein RIBA 1, chloroplastic (RIBA1), found in Oryza sativa subsp. japonica (Rice).